Consider the following 1168-residue polypeptide: MASSSSSRNWVYDVFLSFSGKDVRVTFRSHFLKELDRKLISAFRDNEIERSHSLWPDLEQAIKDSRIAVVVFSKNYASSSWCLNELLEIVNCNDKIIIPVFYGVDPSQVRYQIGEFGSIFEKTCKRQTEEVKNQWKKALTDVANMLGFDSAKWDDEAKMIEEIANDVLAKLLLTSSTDSAENSIGIEDHIANMSVLLKLEAEEVRMVGIWGSSGIGKTTIARALFNQLSRHFPVSKFIDRAFVYKSRETYKGANPDDPNMKLHLQGCFLSEILGKKDIKIDHLGALGERLKHQKTLIIIDDLDDLVVLDSLVGKTNWFGCGSRIIVITNNKQFLRAHGIDHIYEVSLPSKERAQEMFCQSAFGENSPPEGFEELVVEIAWLAGSLPLGLTVFGSALRGRKKEYWVKMLPRLQNDLDGNIEETLKVSYDAIGNVKDQALFRLIACLFNHVKVRDIELLLADSGLDVNIALENLVDKSLIHVRNDHVEMHRLLQETGRNIVRSQSTDNPGEREFLVDSNDSRTVLSEGIGTRKVLGISLDTSKVSEFCVHENAFKGMGNLLFLDISSKTFIEEEVKVHLPEKINYYSVQPKQLIWDRFPLKCMPYTFLRNLVKLEMHDSKLEKLWEGAMSFTCLKELDMWASKYLKEIPDLSKATNIEKLDFGHCWSLVELPSSIRNLNKLLELNMEYCGELETLPTGFNLKSLDYLNFNECWKLRTFPEFATNISNLILAETSIEEYPSNLYFKNVRELSMGKADSDENKCQGVKPFMPMLSPTLTLLELWNIPNLVELSSSFQNLNNLERLDICYCRNLESLPTGINLESLVSLNLFGCSRLKRFPDISTNIKYLDLDQTGIEEVPWQIENFFNLTKLTMKGCRELKCVSLNIFKLKHLGEVSFSNCGALTRVDLSCYPSGVEMMKADNADIVSEETTSSLPDSCVLNVNFMDCVNLDREPVLHQQSIIFNSMILPGEEVPSYFTYRTSDSQPFGTSSSLPIPLLPTQLSQPFFRFRVCAVVSASNGVYIGVYSRFKGRIGNKFDSFGEVHNFMEIEKGIHLCIFDCRIRLYKDNVPLSQLNYDHVDINIHITSGDWRSTVVLKEWGIRLLETGSSAENRLGNPNSTLPHVSQAEEGNMGYYTHVQGLVNEIENSEDSGDNNVETERSKKRMRLHHFI.

Residues 10 to 171 (WVYDVFLSFS…EIANDVLAKL (162 aa)) enclose the TIR domain. E85 is a catalytic residue. An NB-ARC domain is found at 187–452 (EDHIANMSVL…ACLFNHVKVR (266 aa)). LRR repeat units follow at residues 539–562 (TSKV…LFLD), 606–629 (LRNL…AMSF), 631–653 (CLKE…SKAT), 676–699 (LNKL…GFNL), 701–720 (SLDY…PEFA), 721–744 (TNIS…YFKN), 795–820 (LNNL…NLES), 839–865 (STNI…FFNL), 873–896 (CREL…SFSN), and 1065–1089 (NVPL…DWRS).

Belongs to the disease resistance NB-LRR family. In terms of assembly, part of a nuclear protein complex made of VICTR, PAD4 and EDS1. Interacts (via TIR domain) with PAD4 and EDS1.

Its subcellular location is the cytoplasm. The protein localises to the nucleus. The enzyme catalyses NAD(+) + H2O = ADP-D-ribose + nicotinamide + H(+). In terms of biological role, disease resistance protein of the TIR-NB-LRR-type. Part of the RPS6 locus that contains a cluster of several paralogous disease resistance (R) genes. Resistance proteins guard the plant against pathogens that contain an appropriate avirulence protein via an indirect interaction with this avirulence protein. That triggers a defense system including the hypersensitive response, which restricts the pathogen growth. Required for [5-(3,4-dichlorophenyl)furan-2-yl]-piperidine-1-ylmethanethione-(DFPM-) induced root growth arrest due to reduced number of meristem cells in the division zone of the primary root and inhibition of abscisic acid- (ABA-) induced stomatal closing. The protein is Protein VARIATION IN COMPOUND TRIGGERED ROOT growth response (VICTR) of Arabidopsis thaliana (Mouse-ear cress).